Consider the following 133-residue polypeptide: ATP synthase epsilon chain, chloroplastic (133 aa).

It belongs to the ATPase epsilon chain family. As to quaternary structure, F-type ATPases have 2 components, CF(1) - the catalytic core - and CF(0) - the membrane proton channel. CF(1) has five subunits: alpha(3), beta(3), gamma(1), delta(1), epsilon(1). CF(0) has three main subunits: a, b and c.

The protein resides in the plastid. It is found in the chloroplast thylakoid membrane. Functionally, produces ATP from ADP in the presence of a proton gradient across the membrane. This is ATP synthase epsilon chain, chloroplastic from Citrus sinensis (Sweet orange).